Consider the following 361-residue polypeptide: Alanine racemase (361 aa).

Catalysis depends on K34, which acts as the Proton acceptor; specific for D-alanine. K34 carries the N6-(pyridoxal phosphate)lysine modification. R129 provides a ligand contact to substrate. Residue Y256 is the Proton acceptor; specific for L-alanine of the active site. M304 serves as a coordination point for substrate.

The protein belongs to the alanine racemase family. It depends on pyridoxal 5'-phosphate as a cofactor.

The enzyme catalyses L-alanine = D-alanine. It functions in the pathway amino-acid biosynthesis; D-alanine biosynthesis; D-alanine from L-alanine: step 1/1. Its function is as follows. Catalyzes the interconversion of L-alanine and D-alanine. May also act on other amino acids. The polypeptide is Alanine racemase (alr) (Corynebacterium glutamicum (strain R)).